Here is a 441-residue protein sequence, read N- to C-terminus: MGTTSPNSEKRQITDINERRKLQNRVAQRKYRTRQKTRMKLAEAVLNDYTYIHPTLGTIQSKKKSPLTMECDRSSASYPDLSSYAEICSETRSETQATRARQLTSQRTCFRESVDNNQADSHAQLSRCLNRQEMFYGISGETEFSEGDTRDRVECIDPNLTRGWLDMDLRSGTPNSSTVVDCGLCTVGANSQPPTRTNVQEAIETLELFEPNDQRKTENLPREPCGSCPSSSHGYSPTSGNPSTLLLTPSESLMNSVIVTSDSPLLAADDKSPGDLVISEANTHGPKEDQFSPLMTAISLGRLDIARILLQSGAPLDIPDDSGKTALHRAVGRRELHMVEALLNLGAEMLATDHEGNSLLHIAVKTNSLSITRLLLERYKSCRELKDAQLGHGCRQHGNQVHSESWIDLRNREGMTAVHLSVIFNRPEILQLLVKYSANVN.

Residues Thr14–Lys40 are basic DNA-binding region. The disordered stretch occupies residues Phe209–Ser243. Residues Asn212–Pro221 show a composition bias toward basic and acidic residues. Residues Cys228–Asn241 show a composition bias toward polar residues. ANK repeat units lie at residues Asp289 to Ile318, Ser322 to Ala351, Glu355 to Glu384, and Glu413 to Val440.

This sequence belongs to the bZIP family. In terms of assembly, monomer.

It localises to the nucleus. In terms of biological role, transcription factor, part of the diffuse TOX2 gene cluster that mediates the biosynthesis of the HC-toxin, cyclic tetrapeptide of structure cyclo(D-Pro-L-Ala-D-Ala-L-Aeo), where Aeo stands for 2-amino-9,10-epoxi-8-oxodecanoic acid. HC-toxin is a determinant of specificity and virulence in the interaction between the producing fungus and its host, maize. TOXE is a pathway-specific transcription factor which coordinates the expression of genes involved in HC-toxin biosynthesis. Binds to the tox-box, a 10-bp motif with the consensus 5'-ATCTCNCGNA-3', which is found in the promoter of all genes involved in HC-toxin biosynthesis. Required for pathogenicity of the fungus on maize. The polypeptide is Transcription factor TOXE (Cochliobolus carbonum (Maize leaf spot fungus)).